A 422-amino-acid polypeptide reads, in one-letter code: Phosphoglycerate kinase (422 aa).

Substrate is bound by residues 24-26 (DLN), 64-67 (HLGR), R129, and R171. Residues K222, G309, E340, and 370–373 (DIDT) contribute to the ATP site.

It belongs to the phosphoglycerate kinase family. Monomer.

It localises to the cytoplasm. The enzyme catalyses (2R)-3-phosphoglycerate + ATP = (2R)-3-phospho-glyceroyl phosphate + ADP. It participates in carbohydrate degradation; glycolysis; pyruvate from D-glyceraldehyde 3-phosphate: step 2/5. The chain is Phosphoglycerate kinase (pgk) from Ureaplasma parvum serovar 3 (strain ATCC 700970).